A 312-amino-acid polypeptide reads, in one-letter code: Glutathione synthetase (312 aa).

Positions 125-309 (KIFVTEFPDL…IAALFWDAVE (185 aa)) constitute an ATP-grasp domain. 151–207 (RREFGDIILKPLYGNGGAGVFHLADGDRNLTSLLEMFGQLFREPFIAQRYLKDVRAG) lines the ATP pocket. 2 residues coordinate Mg(2+): Glu280 and Asn282.

This sequence belongs to the prokaryotic GSH synthase family. Mg(2+) is required as a cofactor. The cofactor is Mn(2+).

It catalyses the reaction gamma-L-glutamyl-L-cysteine + glycine + ATP = glutathione + ADP + phosphate + H(+). The protein operates within sulfur metabolism; glutathione biosynthesis; glutathione from L-cysteine and L-glutamate: step 2/2. The protein is Glutathione synthetase of Brucella melitensis biotype 1 (strain ATCC 23456 / CCUG 17765 / NCTC 10094 / 16M).